Reading from the N-terminus, the 314-residue chain is Chlorinase cctP2 (314 aa).

Basic and acidic residues predominate over residues 1–14 (MEGKTSRYQDEAHD). The disordered stretch occupies residues 1-24 (MEGKTSRYQDEAHDSAGSFNEETE). Short sequence motifs (HXXHC) lie at residues 150–154 (HALHC) and 177–181 (HIEHC).

It belongs to the ustYa family.

The protein operates within mycotoxin biosynthesis. Chlorinase; part of the gene cluster that mediates the biosynthesis of the mycotoxin cyclochlorotine, a hepatotoxic and carcinogenic cyclic chlorinated pentapeptide. Within the pathway, cctP2 catalyzes the formation of isocyclochlorotine via dichlorination of the Pro from the isocyclotine skeleton. The NRPS cctN initially catalyzes the condensation of L-serine (Ser), Pro, L-2-aminobutyrate (2Abu), Ser, and beta-Phe in this order to produce isocyclotine. After the dichlorination of Pro2 catalyzed by cctP2 to produce isocyclochlorotine, the cctO-mediated transacylation of isocyclochlorotine can furnish cyclochlorotine. The subsequent hydroxylation of cyclochlorotine by cctR yields hydroxycyclochlorotine as the final product. CctP1 probably acts as a phenylalanine aminomutase and provides the uncommon building block beta-Phe. Furthermore, 2Abu can be synthesized from threonine by one of the threonine dehydratases and transaminases localized outside of the cluster. The functions of the remaining proteins encoded by the cluster, cctM and cctT, have not been identified yet. The sequence is that of Chlorinase cctP2 from Talaromyces islandicus (Penicillium islandicum).